The primary structure comprises 360 residues: Melanoma-associated antigen B16 (360 aa).

Residues M1 to P118 are disordered. Over residues A9–M19 the composition is skewed to basic and acidic residues. Positions C63–S98 are enriched in polar residues. Residues I125–A324 enclose the MAGE domain. The disordered stretch occupies residues A340–I360. Over residues G341–I360 the composition is skewed to low complexity.

This Rattus norvegicus (Rat) protein is Melanoma-associated antigen B16 (Mageb16).